Here is a 429-residue protein sequence, read N- to C-terminus: Glutamate-1-semialdehyde 2,1-aminomutase 1 (429 aa).

The residue at position 267 (Lys267) is an N6-(pyridoxal phosphate)lysine.

Belongs to the class-III pyridoxal-phosphate-dependent aminotransferase family. HemL subfamily. Homodimer. The cofactor is pyridoxal 5'-phosphate.

It is found in the cytoplasm. It catalyses the reaction (S)-4-amino-5-oxopentanoate = 5-aminolevulinate. It functions in the pathway porphyrin-containing compound metabolism; protoporphyrin-IX biosynthesis; 5-aminolevulinate from L-glutamyl-tRNA(Glu): step 2/2. The polypeptide is Glutamate-1-semialdehyde 2,1-aminomutase 1 (Staphylococcus carnosus (strain TM300)).